A 225-amino-acid chain; its full sequence is Putative membrane protease YugP (225 aa).

Histidine 95 is a Zn(2+) binding site. Glutamate 96 is an active-site residue. Zn(2+) is bound by residues histidine 99 and histidine 103. 3 consecutive transmembrane segments (helical) span residues 116–138, 140–162, and 192–212; these read IFPVVNFASGVAPLLFLGGMLLG, LNLIGLGIILFSAAVFFQLITLP, and VLSAAALTYVAAALVSLFELL.

Its subcellular location is the cell membrane. This chain is Putative membrane protease YugP (yugP), found in Bacillus subtilis (strain 168).